The chain runs to 83 residues: Exodeoxyribonuclease 7 small subunit (83 aa).

It belongs to the XseB family. In terms of assembly, heterooligomer composed of large and small subunits.

The protein localises to the cytoplasm. It carries out the reaction Exonucleolytic cleavage in either 5'- to 3'- or 3'- to 5'-direction to yield nucleoside 5'-phosphates.. In terms of biological role, bidirectionally degrades single-stranded DNA into large acid-insoluble oligonucleotides, which are then degraded further into small acid-soluble oligonucleotides. In Rhizobium meliloti (strain 1021) (Ensifer meliloti), this protein is Exodeoxyribonuclease 7 small subunit.